Here is a 905-residue protein sequence, read N- to C-terminus: Chitin synthase 3B (905 aa).

Positions 1–10 (MAYNGRDQEY) are enriched in basic and acidic residues. The disordered stretch occupies residues 1-136 (MAYNGRDQEY…GGGGGLGRSK (136 aa)). The span at 81-93 (GPTGYGDTGGSFG) shows a compositional bias: gly residues. N-linked (GlcNAc...) asparagine glycosylation is present at asparagine 536. The helical transmembrane segment at 562–584 (MFFLHIQLIYTTLNTMFAWFSLG) threads the bilayer. Asparagine 601 is a glycosylation site (N-linked (GlcNAc...) asparagine). A run of 6 helical transmembrane segments spans residues 618–638 (IVNA…FILA), 653–673 (SFMV…YLVV), 705–725 (VILV…FMYL), 733–753 (SFPY…VYAF), 832–852 (TGLV…ITST), and 873–893 (FLLY…LWFL).

It belongs to the chitin synthase family. Class III subfamily.

The protein resides in the cell membrane. The enzyme catalyses [(1-&gt;4)-N-acetyl-beta-D-glucosaminyl](n) + UDP-N-acetyl-alpha-D-glucosamine = [(1-&gt;4)-N-acetyl-beta-D-glucosaminyl](n+1) + UDP + H(+). Functionally, polymerizes chitin, a structural polymer of the cell wall and septum, by transferring the sugar moiety of UDP-GlcNAc to the non-reducing end of the growing chitin polymer. Plays essential functions in fungal survival and host infection. In Gibberella zeae (strain ATCC MYA-4620 / CBS 123657 / FGSC 9075 / NRRL 31084 / PH-1) (Wheat head blight fungus), this protein is Chitin synthase 3B.